The sequence spans 335 residues: Biotin synthase (335 aa).

Residues 46 to 274 (YNIQLASLFS…KSKIRLSAGR (229 aa)) enclose the Radical SAM core domain. Residues cysteine 61, cysteine 65, and cysteine 68 each coordinate [4Fe-4S] cluster. [2Fe-2S] cluster-binding residues include cysteine 105, cysteine 137, cysteine 197, and arginine 269.

It belongs to the radical SAM superfamily. Biotin synthase family. Homodimer. Requires [4Fe-4S] cluster as cofactor. [2Fe-2S] cluster is required as a cofactor.

It catalyses the reaction (4R,5S)-dethiobiotin + (sulfur carrier)-SH + 2 reduced [2Fe-2S]-[ferredoxin] + 2 S-adenosyl-L-methionine = (sulfur carrier)-H + biotin + 2 5'-deoxyadenosine + 2 L-methionine + 2 oxidized [2Fe-2S]-[ferredoxin]. Its pathway is cofactor biosynthesis; biotin biosynthesis; biotin from 7,8-diaminononanoate: step 2/2. Its function is as follows. Catalyzes the conversion of dethiobiotin (DTB) to biotin by the insertion of a sulfur atom into dethiobiotin via a radical-based mechanism. The polypeptide is Biotin synthase (Prochlorococcus marinus (strain MIT 9312)).